A 375-amino-acid polypeptide reads, in one-letter code: Probable neutral protease 2 homolog ARB_05817 (375 aa).

The signal sequence occupies residues M1–G19. Residues F20–R189 constitute a propeptide that is removed on maturation. Cystine bridges form between C197–C267 and C274–C292. H317 contacts Zn(2+). E318 is an active-site residue. The Zn(2+) site is built by H321 and D332.

Belongs to the peptidase M35 family. Zn(2+) is required as a cofactor.

It localises to the secreted. It catalyses the reaction Preferential cleavage of bonds with hydrophobic residues in P1'. Also 3-Asn-|-Gln-4 and 8-Gly-|-Ser-9 bonds in insulin B chain.. Functionally, probable secreted metalloprotease that shows high activities on basic nuclear substrates such as histone and protamine. May be involved in virulence. This Arthroderma benhamiae (strain ATCC MYA-4681 / CBS 112371) (Trichophyton mentagrophytes) protein is Probable neutral protease 2 homolog ARB_05817.